A 2646-amino-acid chain; its full sequence is Probable helicase senataxin (2646 aa).

The residue at position 102 (Ser-102) is a Phosphoserine. Residue Lys-339 forms a Glycyl lysine isopeptide (Lys-Gly) (interchain with G-Cter in SUMO1) linkage. Residue Ser-640 is modified to Phosphoserine. Disordered stretches follow at residues 705–734 (KISAEKSGKESSSYAPSNSTSRNGPEWGCD) and 825–876 (GGAL…DDED). Residues 714 to 727 (ESSSYAPSNSTSRN) are compositionally biased toward polar residues. The segment covering 867–876 (LDNSSSDDED) has biased composition (acidic residues). Phosphoserine is present on residues Ser-870, Ser-871, Ser-872, Ser-938, Ser-1002, and Ser-1004. Residues 1001–1023 (ISDSDEEEDEDEDERSSSEENIK) form a disordered region. Residues 1003 to 1014 (DSDEEEDEDEDE) show a composition bias toward acidic residues. Lys-1051 is covalently cross-linked (Glycyl lysine isopeptide (Lys-Gly) (interchain with G-Cter in SUMO2)). A compositionally biased stretch (basic and acidic residues) spans 1122–1133 (RNKAEGVKEHAG). A disordered region spans residues 1122-1245 (RNKAEGVKEH…DTRRGQSKSS (124 aa)). A compositionally biased stretch (basic residues) spans 1147-1156 (GVKKPKRKRY). Residues 1176–1189 (LPDRRDLTESDLKS) are compositionally biased toward basic and acidic residues. A compositionally biased stretch (polar residues) spans 1196–1211 (TPSSSVERDSTILQKS). Residues 1212–1222 (TKSRTHSKPVR) show a composition bias toward basic residues. Phosphoserine is present on Ser-1318. Glycyl lysine isopeptide (Lys-Gly) (interchain with G-Cter in SUMO2) cross-links involve residues Lys-1328, Lys-1329, and Lys-1398. A Phosphoserine modification is found at Ser-1472. Thr-1474 is subject to Phosphothreonine. Positions 1591–1627 (LSKSLESTTLQQSALKNKSSGAQPNLKVTPPSSMGSQ) are disordered. Residues 1595–1613 (LESTTLQQSALKNKSSGAQ) show a composition bias toward polar residues. An ATP-binding site is contributed by 1939 to 1946 (GPPGTGKS). The short motif at 2046-2063 (KKDLPSHIQEMLRRKEIL) is the Bipartite nuclear localization signal element. Thr-2450 carries the post-translational modification Phosphothreonine. Disordered stretches follow at residues 2450-2472 (THPPATAPEAPRPQGGLPSNRLD), 2486-2506 (HTPSDTVTSKGPERPLLQDRL), and 2569-2624 (SHRS…THHV). Composition is skewed to basic and acidic residues over residues 2496-2506 (GPERPLLQDRL) and 2593-2608 (KYSDPDAGLSHKREPR). Residues 2632 to 2646 (RRRLDDSSAKRRQFL) are necessary for nuclear localization.

The protein belongs to the DNA2/NAM7 helicase family. Homodimer. Interacts with PER2; the interaction inhibits termination of circadian target genes. Interacts with CHD4, POLR2A, PRKDC and TRIM28. Interacts with UBE2I. Interacts (via N-terminus domain) with EXOSC9 (via C-terminus region); the interaction enhances SETX sumoylation. Interacts with NCL (via N-terminus domain). Interacts with PABPN1, PABPC1 and SF3B1. Interacts with SMN1/SMN2 and POLR2A; SMN1/SMN2 recruits SETX to POLR2A. Ubiquitinated. In terms of processing, sumoylated preferentially with SUMO2 or SUMO3. Expressed in cerebellum, hippocampus, olfactory bulb, Bergmann glial fibers, stellate cells and Purkinje cells. Expressed in the epithelial cells of the lens but not in mature lens fiber cells. Expressed in the retina (highly expressed in inner and outer segments of photoreceptors and outer plexiform layer cells but weakly expressed in the inner plexiform and ganglion cell layers). Expressed in the kidney.

It is found in the nucleus. It localises to the nucleoplasm. The protein resides in the nucleolus. Its subcellular location is the cytoplasm. The protein localises to the chromosome. It is found in the telomere. It localises to the cell projection. The protein resides in the axon. Its subcellular location is the growth cone. Its function is as follows. Probable RNA/DNA helicase involved in diverse aspects of RNA metabolism and genomic integrity. Plays a role in transcription regulation by its ability to modulate RNA Polymerase II (Pol II) binding to chromatin and through its interaction with proteins involved in transcription. Contributes to the mRNA splicing efficiency and splice site selection. Required for the resolution of R-loop RNA-DNA hybrid formation at G-rich pause sites located downstream of the poly(A) site, allowing XRN2 recruitment and XRN2-mediated degradation of the downstream cleaved RNA and hence efficient RNA polymerase II (RNAp II) transcription termination. Required for the 3' transcriptional termination of PER1 and CRY2, thus playing an important role in the circadian rhythm regulation. Involved in DNA double-strand breaks damage response generated by oxidative stress. In association with RRP45, targets the RNA exosome complex to sites of transcription-induced DNA damage. Plays a role in the development and maturation of germ cells: essential for male meiosis, acting at the interface of transcription and meiotic recombination, and in the process of gene silencing during meiotic sex chromosome inactivation (MSCI). Plays a role in neurite outgrowth in hippocampal cells through FGF8-activated signaling pathways. Inhibits retinoic acid-induced apoptosis. May be involved in telomeric stability through the regulation of telomere repeat-containing RNA (TERRA) transcription. In Mus musculus (Mouse), this protein is Probable helicase senataxin.